Reading from the N-terminus, the 358-residue chain is Transcription factor bHLH67 (358 aa).

The interval N125–Q176 is disordered. The span at T127 to S137 shows a compositional bias: low complexity. Basic residues predominate over residues E157 to P166. A bHLH domain is found at N175–L226.

In terms of assembly, homodimer. In terms of tissue distribution, expressed constitutively in roots, leaves, stems, and flowers.

The protein localises to the nucleus. The polypeptide is Transcription factor bHLH67 (BHLH67) (Arabidopsis thaliana (Mouse-ear cress)).